Here is a 376-residue protein sequence, read N- to C-terminus: Queuine tRNA-ribosyltransferase (376 aa).

The active-site Proton acceptor is the Asp-93. Substrate contacts are provided by residues 93 to 97 (DSGGF), Asp-147, Gln-190, and Gly-217. Residues 248-254 (GVGKPDD) are RNA binding. The active-site Nucleophile is Asp-267. 4 residues coordinate Zn(2+): Cys-305, Cys-307, Cys-310, and His-336.

It belongs to the queuine tRNA-ribosyltransferase family. In terms of assembly, homodimer. Within each dimer, one monomer is responsible for RNA recognition and catalysis, while the other monomer binds to the replacement base PreQ1. Zn(2+) serves as cofactor.

The enzyme catalyses 7-aminomethyl-7-carbaguanine + guanosine(34) in tRNA = 7-aminomethyl-7-carbaguanosine(34) in tRNA + guanine. It functions in the pathway tRNA modification; tRNA-queuosine biosynthesis. Catalyzes the base-exchange of a guanine (G) residue with the queuine precursor 7-aminomethyl-7-deazaguanine (PreQ1) at position 34 (anticodon wobble position) in tRNAs with GU(N) anticodons (tRNA-Asp, -Asn, -His and -Tyr). Catalysis occurs through a double-displacement mechanism. The nucleophile active site attacks the C1' of nucleotide 34 to detach the guanine base from the RNA, forming a covalent enzyme-RNA intermediate. The proton acceptor active site deprotonates the incoming PreQ1, allowing a nucleophilic attack on the C1' of the ribose to form the product. After dissociation, two additional enzymatic reactions on the tRNA convert PreQ1 to queuine (Q), resulting in the hypermodified nucleoside queuosine (7-(((4,5-cis-dihydroxy-2-cyclopenten-1-yl)amino)methyl)-7-deazaguanosine). The protein is Queuine tRNA-ribosyltransferase of Cereibacter sphaeroides (strain ATCC 17029 / ATH 2.4.9) (Rhodobacter sphaeroides).